Consider the following 914-residue polypeptide: TRPM8 channel-associated factor 3 (914 aa).

A Peptidase M60 domain is found at 533 to 832 (NSWVSTGLYL…TYLQLQEGFG (300 aa)).

It belongs to the TCAF family. In terms of tissue distribution, prostate-specific. Present in both dorso-lateral and anterior prostate.

Functionally, may play a role in the regulation of the cation channel TRPM8 activity. The protein is TRPM8 channel-associated factor 3 of Mus musculus (Mouse).